The primary structure comprises 197 residues: Class A basic helix-loop-helix protein 15 (197 aa).

Basic residues predominate over residues 1–12; it reads MKTKNRPPRRRT. Disordered regions lie at residues 1 to 82 and 178 to 197; these read MKTK…ERER and QPQGHLQRYSTQIHSFREGS. Phosphothreonine occurs at positions 12 and 25. A compositionally biased stretch (basic and acidic residues) spans 65-82; it reads GRRENSVQRRLESNERER. The region spanning 72-124 is the bHLH domain; that stretch reads QRRLESNERERQRMHKLNNAFQALREVIPHVRADKKLSKIETLTLAKNYIKSL.

As to quaternary structure, forms homodimers or heterodimers with TCF3 gene products E12 and E47. These dimers bind to the E-box site, however, heterodimer with MYOD1 does not bind target DNA. Expressed in pancreatic tissue only in acinar cells. There is a complete absence of expression in intra- or interlobular pancreatic ducts and in all islet cells.

The protein localises to the nucleus. Its function is as follows. Plays a role in controlling the transcriptional activity of MyoD, ensuring that expanding myoblast populations remain undifferentiated. Repression may occur through muscle-specific E-box occupancy by homodimers. May also negatively regulate bHLH-mediated transcription through an N-terminal repressor domain. Serves as a key regulator of acinar cell function, stability, and identity. Also required for normal organelle localization in exocrine cells and for mitochondrial calcium ion transport. May function as a unique regulator of gene expression in several different embryonic and postnatal cell lineages. Binds to the E-box consensus sequence 5'-CANNTG-3'. In Mus musculus (Mouse), this protein is Class A basic helix-loop-helix protein 15 (Bhlha15).